A 322-amino-acid chain; its full sequence is DNA repair and recombination protein RadA (322 aa).

Position 105 to 112 (105 to 112 (GMYGSGKT)) interacts with ATP.

The protein belongs to the eukaryotic RecA-like protein family.

In terms of biological role, involved in DNA repair and in homologous recombination. Binds and assemble on single-stranded DNA to form a nucleoprotein filament. Hydrolyzes ATP in a ssDNA-dependent manner and promotes DNA strand exchange between homologous DNA molecules. The chain is DNA repair and recombination protein RadA from Methanococcus maripaludis (strain C7 / ATCC BAA-1331).